We begin with the raw amino-acid sequence, 207 residues long: Claudin-11 (207 aa).

Methionine 1 is a topological domain (cytoplasmic). A helical transmembrane segment spans residues 2 to 22 (VATCLQVVGFVTSFVGWIGII). At 23–82 (VTTSTNDWVVTCSYTIPTCRKMDELGSKGLWADCVMATGLHHCKPLVDILILPGYAQACR) the chain is on the extracellular side. Residues 83–103 (ALMIAASVLGLPGILLLLTVL) traverse the membrane as a helical segment. At 104–122 (PCIRMGHEPGVAKYRRAQL) the chain is on the cytoplasmic side. A helical membrane pass occupies residues 123-143 (AGVLLILLALCAIVATIWFPV). Residues 144-157 (CAHREITIVSFGYS) lie on the Extracellular side of the membrane. Residues 158–178 (LYAGWIGAVMCLVGGCVIVCC) traverse the membrane as a helical segment. The Cytoplasmic portion of the chain corresponds to 179–207 (SGDAQSFGENRFYYSSGSSSPTHAKSAHV). Serine 193, serine 194, serine 197, and serine 198 each carry phosphoserine.

It belongs to the claudin family. Interacts with tetraspanin-3/TSPAN3. Interacts with OCLN.

The protein localises to the cell junction. Its subcellular location is the tight junction. The protein resides in the cell membrane. Functionally, plays a major role in tight junction-specific obliteration of the intercellular space, through calcium-independent cell-adhesion activity. The sequence is that of Claudin-11 (Cldn11) from Rattus norvegicus (Rat).